The chain runs to 521 residues: GMP synthase [glutamine-hydrolyzing] (521 aa).

The Glutamine amidotransferase type-1 domain occupies 5–197 (KILILDFGSQ…VLDICGAQPG (193 aa)). The active-site Nucleophile is the C81. Catalysis depends on residues H171 and E173. Positions 198-390 (WTMPNYIEEA…LGLPREMVYR (193 aa)) constitute a GMPS ATP-PPase domain. 225–231 (SGGVDSS) lines the ATP pocket.

In terms of assembly, homodimer.

The enzyme catalyses XMP + L-glutamine + ATP + H2O = GMP + L-glutamate + AMP + diphosphate + 2 H(+). It functions in the pathway purine metabolism; GMP biosynthesis; GMP from XMP (L-Gln route): step 1/1. Its function is as follows. Catalyzes the synthesis of GMP from XMP. The chain is GMP synthase [glutamine-hydrolyzing] (guaA) from Neisseria meningitidis serogroup B (strain ATCC BAA-335 / MC58).